A 1254-amino-acid chain; its full sequence is Histone-lysine N-methyltransferase eggless (1254 aa).

Disordered stretches follow at residues 24–209 and 228–248; these read ALVE…EIPR and PVPR…SKTT. Composition is skewed to basic and acidic residues over residues 40-57 and 65-81; these read TPEK…KDLT and KSQE…KDPE. Residues 112–125 show a composition bias toward low complexity; sequence SVELLESPLKSPSS. The segment covering 136–162 has biased composition (basic and acidic residues); it reads LEEKEKPGPAKELEPKESEPDSKESSK. A compositionally biased stretch (polar residues) spans 172-181; sequence ELISSPTSDD. Composition is skewed to basic and acidic residues over residues 182 to 197 and 234 to 243; these read SLAK…EHGQ and AMQESKETQK. Residues 391–416 are a coiled coil; it reads TILQAKIERLAKKFEEVDLQLAQVQG. Tudor domains lie at 535–607 and 634–691; these read RLPI…SEKV and QCTK…KETQ. Positions 734-760 are disordered; the sequence is ARKSTSKSGSPASTAAPPTGSSSSSAV. Positions 739 to 759 are enriched in low complexity; sequence SKSGSPASTAAPPTGSSSSSA. One can recognise an MBD domain in the interval 811-877; sequence LDSYSPLSKP…DNFDFTPDLR (67 aa). Residues 939–1011 enclose the Pre-SET domain; the sequence is VCCDCEDDCS…NCLNRVVQHS (73 aa). C941, C943, C947, C953, C955, C993, C997, C999, and C1003 together coordinate Zn(2+). One can recognise an SET domain in the interval 1014–1229; that stretch reads MKLQVFKTSN…SGTELTWNYN (216 aa). S-adenosyl-L-methionine is bound by residues 1024 to 1026, D1062, and Y1064; that span reads RGW. Positions 1081–1090 are enriched in basic and acidic residues; the sequence is YESDVERADL. A disordered region spans residues 1081–1139; sequence YESDVERADLDHEDDNYGPDAEDDDDFRPNNYYQKKKEKLRSSRSNSSSTQNTELDSQE. Positions 1091 to 1106 are enriched in acidic residues; that stretch reads DHEDDNYGPDAEDDDD. The span at 1123–1134 shows a compositional bias: low complexity; that stretch reads SRSNSSSTQNTE. Residues R1183 and 1186-1187 each bind S-adenosyl-L-methionine; that span reads NH. Residues C1189, C1242, C1244, and C1249 each contribute to the Zn(2+) site. The region spanning 1238 to 1254 is the Post-SET domain; that stretch reads KVLYCQCGAQNCRVRLL.

This sequence belongs to the class V-like SAM-binding methyltransferase superfamily. Histone-lysine methyltransferase family. Suvar3-9 subfamily.

Its subcellular location is the nucleus. The protein resides in the chromosome. The catalysed reaction is L-lysyl(9)-[histone H3] + 3 S-adenosyl-L-methionine = N(6),N(6),N(6)-trimethyl-L-lysyl(9)-[histone H3] + 3 S-adenosyl-L-homocysteine + 3 H(+). Functionally, histone methyltransferase that specifically trimethylates 'Lys-9' of histone H3 in ovary. H3 'Lys-9' trimethylation represents a specific tag for epigenetic transcriptional repression by recruiting Su(var)205/HP1 to methylated histones. Plays a central role during oogenesis. This Drosophila pseudoobscura pseudoobscura (Fruit fly) protein is Histone-lysine N-methyltransferase eggless (egg).